The following is a 305-amino-acid chain: 4-hydroxy-tetrahydrodipicolinate synthase 1 (305 aa).

Position 53 (T53) interacts with pyruvate. The active-site Proton donor/acceptor is the Y141. The Schiff-base intermediate with substrate role is filled by K169. Pyruvate is bound at residue V209.

Belongs to the DapA family. Homotetramer; dimer of dimers.

The protein localises to the cytoplasm. It catalyses the reaction L-aspartate 4-semialdehyde + pyruvate = (2S,4S)-4-hydroxy-2,3,4,5-tetrahydrodipicolinate + H2O + H(+). Its pathway is amino-acid biosynthesis; L-lysine biosynthesis via DAP pathway; (S)-tetrahydrodipicolinate from L-aspartate: step 3/4. Its function is as follows. Catalyzes the condensation of (S)-aspartate-beta-semialdehyde [(S)-ASA] and pyruvate to 4-hydroxy-tetrahydrodipicolinate (HTPA). The protein is 4-hydroxy-tetrahydrodipicolinate synthase 1 of Streptomyces coelicolor (strain ATCC BAA-471 / A3(2) / M145).